Reading from the N-terminus, the 237-residue chain is Probable transcriptional regulatory protein Bpro_2928 (237 aa).

It belongs to the TACO1 family.

The protein resides in the cytoplasm. The polypeptide is Probable transcriptional regulatory protein Bpro_2928 (Polaromonas sp. (strain JS666 / ATCC BAA-500)).